Here is a 695-residue protein sequence, read N- to C-terminus: HIPL1 protein (695 aa).

Residues 1-23 form the signal peptide; sequence MKLHQFLVFLFLFLSCFALSSWA. Asn-37, Asn-67, Asn-107, Asn-113, Asn-128, Asn-151, Asn-175, Asn-190, Asn-208, Asn-337, Asn-429, Asn-511, Asn-527, Asn-641, and Asn-648 each carry an N-linked (GlcNAc...) asparagine glycan. Ser-665 carries GPI-anchor amidated serine lipidation. Positions 666-695 are cleaved as a propeptide — removed in mature form; sequence SSCYKHINGFHGSLVVLFVSLSLILLGLLN.

This sequence belongs to the PQQ oxidoreductase GdhB family. Pyrroloquinoline quinone serves as cofactor.

It is found in the cell membrane. The sequence is that of HIPL1 protein (HIPL1) from Arabidopsis thaliana (Mouse-ear cress).